A 255-amino-acid polypeptide reads, in one-letter code: Ribosomal RNA small subunit methyltransferase G (255 aa).

Residues 1-44 form a disordered region; that stretch reads MSSPGRPKGEYRSAQHAGAVAGPPGRPDGEHRGSSGADPNGRLR. S-adenosyl-L-methionine-binding positions include glycine 118, leucine 123, 169-170, and arginine 183; that span reads VE.

This sequence belongs to the methyltransferase superfamily. RNA methyltransferase RsmG family.

The protein localises to the cytoplasm. The enzyme catalyses guanosine(527) in 16S rRNA + S-adenosyl-L-methionine = N(7)-methylguanosine(527) in 16S rRNA + S-adenosyl-L-homocysteine. Functionally, specifically methylates the N7 position of guanine in position 527 of 16S rRNA. The sequence is that of Ribosomal RNA small subunit methyltransferase G from Bordetella petrii (strain ATCC BAA-461 / DSM 12804 / CCUG 43448).